Consider the following 285-residue polypeptide: Ubiquinone biosynthesis protein COQ4, mitochondrial (285 aa).

The N-terminal 11 residues, 1-11 (MPPTVRQGIRT), are a transit peptide targeting the mitochondrion. Residues H166, D167, H170, and E182 each contribute to the Zn(2+) site.

It belongs to the COQ4 family. In terms of assembly, component of a multi-subunit COQ enzyme complex, composed of at least COQ3, COQ4, COQ5, COQ6, COQ7 and COQ9. It depends on Zn(2+) as a cofactor.

It localises to the mitochondrion inner membrane. The enzyme catalyses a 4-hydroxy-3-methoxy-5-(all-trans-polyprenyl)benzoate + H(+) = a 2-methoxy-6-(all-trans-polyprenyl)phenol + CO2. It participates in cofactor biosynthesis; ubiquinone biosynthesis. Lyase that catalyzes the C1-decarboxylation of 4-hydroxy-3-methoxy-5-(all-trans-polyprenyl)benzoic acid into 2-methoxy-6-(all-trans-polyprenyl)phenol during ubiquinone biosynthesis. The polypeptide is Ubiquinone biosynthesis protein COQ4, mitochondrial (Paracoccidioides brasiliensis (strain Pb18)).